The sequence spans 367 residues: 2-aminoethylphosphonate--pyruvate transaminase (367 aa).

N6-(pyridoxal phosphate)lysine is present on Lys-194.

The protein belongs to the class-V pyridoxal-phosphate-dependent aminotransferase family. PhnW subfamily. Homodimer. It depends on pyridoxal 5'-phosphate as a cofactor.

The catalysed reaction is (2-aminoethyl)phosphonate + pyruvate = phosphonoacetaldehyde + L-alanine. In terms of biological role, involved in phosphonate degradation. This is 2-aminoethylphosphonate--pyruvate transaminase from Salmonella paratyphi B (strain ATCC BAA-1250 / SPB7).